The following is a 421-amino-acid chain: Testin (421 aa).

The PET domain maps to 92–199 (MILTNPVAAK…GDVKLPCEMD (108 aa)). 3 consecutive LIM zinc-binding domains span residues 234–297 (YSCY…CDSE), 299–359 (PRCA…NHAV), and 362–421 (QGCH…KRMS).

This sequence belongs to the prickle / espinas / testin family. Interacts via LIM domain 1 with ZYX. Interacts (via LIM domain 3) with ENAH and VASP. Interacts with ALKBH4, talin, actin, alpha-actinin, GRIP1 and PXN. Interacts (via LIM domain 2) with ACTL7A (via N-terminus). Heterodimer with ACTL7A; the heterodimer interacts with ENAH to form a heterotrimer.

Its subcellular location is the cytoplasm. It localises to the cell junction. The protein localises to the focal adhesion. In terms of biological role, scaffold protein that may play a role in cell adhesion, cell spreading and in the reorganization of the actin cytoskeleton. Plays a role in the regulation of cell proliferation. May act as a tumor suppressor. In Nomascus leucogenys (Northern white-cheeked gibbon), this protein is Testin (TES).